A 404-amino-acid chain; its full sequence is Protein ORF23 (404 aa).

Belongs to the lymphocryptovirus BTRF1 family. As to quaternary structure, interacts with ORF34.

It localises to the host nucleus. The protein localises to the host cytoplasm. Functionally, plays a role in the expression of late genes. In Homo sapiens (Human), this protein is Protein ORF23 (ORF23).